Here is a 223-residue protein sequence, read N- to C-terminus: UPF0441 protein YgiB (223 aa).

Positions 178–195 are enriched in low complexity; it reads TVPKTAMAPKPATTTTVT. The disordered stretch occupies residues 178–223; the sequence is TVPKTAMAPKPATTTTVTRGGFGESVAKQSTMQRSATGTSSRSMGG. The span at 204–223 shows a compositional bias: polar residues; the sequence is AKQSTMQRSATGTSSRSMGG.

The protein belongs to the UPF0441 family.

In Shigella flexneri serotype 5b (strain 8401), this protein is UPF0441 protein YgiB.